Consider the following 347-residue polypeptide: 5-deoxyribose 1-phosphate isomerase (347 aa).

Substrate is bound by residues 48 to 50 (RGA), Arg-91, and Gln-198. Asp-239 (proton donor) is an active-site residue. Substrate is bound at residue 249–250 (NK).

The protein belongs to the EIF-2B alpha/beta/delta subunits family. DrdI subfamily.

It carries out the reaction 5-deoxy-alpha-D-ribose 1-phosphate = 5-deoxy-D-ribulose 1-phosphate. The protein operates within carbohydrate degradation. In terms of biological role, catalyzes the isomerization of 5-deoxy-alpha-D-ribose 1-phosphate to 5-deoxy-D-ribulose 1-phosphate, as part of a 5-deoxyribose salvage pathway that recycles this toxic radical SAM enzyme by-product to mainstream metabolites. The sequence is that of 5-deoxyribose 1-phosphate isomerase from Bacillus thuringiensis (strain Al Hakam).